The sequence spans 375 residues: Anhydro-N-acetylmuramic acid kinase 1 (375 aa).

20–27 (GTSFDGVD) is an ATP binding site. Positions 351 to 375 (APSTTGVAAPVGGGRRSKPGARELS) are disordered.

It belongs to the anhydro-N-acetylmuramic acid kinase family.

It catalyses the reaction 1,6-anhydro-N-acetyl-beta-muramate + ATP + H2O = N-acetyl-D-muramate 6-phosphate + ADP + H(+). The protein operates within amino-sugar metabolism; 1,6-anhydro-N-acetylmuramate degradation. Its pathway is cell wall biogenesis; peptidoglycan recycling. In terms of biological role, catalyzes the specific phosphorylation of 1,6-anhydro-N-acetylmuramic acid (anhMurNAc) with the simultaneous cleavage of the 1,6-anhydro ring, generating MurNAc-6-P. Is required for the utilization of anhMurNAc either imported from the medium or derived from its own cell wall murein, and thus plays a role in cell wall recycling. This chain is Anhydro-N-acetylmuramic acid kinase 1, found in Jannaschia sp. (strain CCS1).